A 304-amino-acid polypeptide reads, in one-letter code: MQNFGKVAVLMGGFSSEREISLDSGTAILNALKSKGIDAYAFDPKETPLSELKERGFQTAFNILHGTYGEDGAVQGALELLGIPYTGSGVAASAIGMDKYRCKLIWQALGLPVPEFAVLYDDTDFDAVEEKLGLPMFVKPAAEGSSVGVVKVKEKGRLKSVYEELKHLQGEIIAERFIGGGEYSCPVLNGKGLPGIHIIPATEFYDYEAKYNRDDTIYQCPSEDLTEAEESLMRELAVRGAQAIGAEGCVRVDFLKDTDGKLYLLEINTLPGMTGHSLVPKSAAVTGVGFADLCIEILKAAHVG.

The ATP-grasp domain occupies 103-299 (KLIWQALGLP…FADLCIEILK (197 aa)). An ATP-binding site is contributed by 129–184 (EEKLGLPMFVKPAAEGSSVGVVKVKEKGRLKSVYEELKHLQGEIIAERFIGGGEYS). Mg(2+)-binding residues include Asp-253, Glu-266, and Asn-268.

Belongs to the D-alanine--D-alanine ligase family. Mg(2+) serves as cofactor. It depends on Mn(2+) as a cofactor.

The protein localises to the cytoplasm. The enzyme catalyses 2 D-alanine + ATP = D-alanyl-D-alanine + ADP + phosphate + H(+). It functions in the pathway cell wall biogenesis; peptidoglycan biosynthesis. Its function is as follows. Cell wall formation. This Neisseria gonorrhoeae (strain ATCC 700825 / FA 1090) protein is D-alanine--D-alanine ligase.